The following is a 191-amino-acid chain: Protein phosphatase inhibitor 2 (191 aa).

Over residues 20-31 (ESNKPVRQKITE) the composition is skewed to basic and acidic residues. Disordered stretches follow at residues 20 to 52 (ESNK…RGRA) and 67 to 191 (RNVL…PELI). Phosphoserine occurs at positions 45 and 47. Positions 93–109 (SDEEEEEADPMDQDEEG) are enriched in acidic residues. The segment covering 114-136 (KNERFNAHRKAHYDEFRKVKELR) has biased composition (basic and acidic residues).

In terms of assembly, interacts with protein phosphatase 1. Interacts with TOPP1, SRK2D/SNRK2.2, SRK2I/SNRK2.3, SRK2E/SNRK2.6, SRK2C/SNRK2.8 and PYL11. In terms of processing, phosphorylated in vivo. As to expression, expressed in roots, cotyledons, leaves, flowers and siliques.

It localises to the nucleus. Its subcellular location is the cytoplasm. In terms of biological role, inhibitor of protein-phosphatase 1 (PP1). Binds to and inhibits PP1 activity. Acts as negative regulator of abscisic acid (ABA) signaling. Enhances the inhibition of SRK2E/SNRK2.6 by TOPP1. May promote the interaction between TOPP1 and the ABA receptor PYL11. The protein is Protein phosphatase inhibitor 2 of Arabidopsis thaliana (Mouse-ear cress).